Consider the following 90-residue polypeptide: Co-chaperonin GroES (90 aa).

Belongs to the GroES chaperonin family. Heptamer of 7 subunits arranged in a ring. Interacts with the chaperonin GroEL.

The protein localises to the cytoplasm. Its function is as follows. Together with the chaperonin GroEL, plays an essential role in assisting protein folding. The GroEL-GroES system forms a nano-cage that allows encapsulation of the non-native substrate proteins and provides a physical environment optimized to promote and accelerate protein folding. GroES binds to the apical surface of the GroEL ring, thereby capping the opening of the GroEL channel. This is Co-chaperonin GroES from Thermosipho africanus (strain TCF52B).